The chain runs to 316 residues: Ribosomal protein L11 methyltransferase (316 aa).

S-adenosyl-L-methionine contacts are provided by threonine 161, glycine 182, aspartate 204, and asparagine 249.

The protein belongs to the methyltransferase superfamily. PrmA family.

It localises to the cytoplasm. The enzyme catalyses L-lysyl-[protein] + 3 S-adenosyl-L-methionine = N(6),N(6),N(6)-trimethyl-L-lysyl-[protein] + 3 S-adenosyl-L-homocysteine + 3 H(+). Its function is as follows. Methylates ribosomal protein L11. This chain is Ribosomal protein L11 methyltransferase, found in Ruminiclostridium cellulolyticum (strain ATCC 35319 / DSM 5812 / JCM 6584 / H10) (Clostridium cellulolyticum).